Consider the following 2359-residue polypeptide: Low-reducing polyketide synthase drtA (2359 aa).

The 428-residue stretch at Leu-17–Glu-444 folds into the Ketosynthase family 3 (KS3) domain. Active-site for beta-ketoacyl synthase activity residues include Cys-190, His-327, and His-367. The segment at Val-556 to Lys-868 is malonyl-CoA:ACP transacylase (MAT) domain. Ser-648 functions as the For malonyltransferase activity in the catalytic mechanism. Residues His-940–Ala-1077 form an N-terminal hotdog fold region. A dehydratase (DH) domain region spans residues His-940–Asn-1245. A PKS/mFAS DH domain is found at His-940–Val-1250. His-972 acts as the Proton acceptor; for dehydratase activity in catalysis. The interval Ala-1089–Val-1250 is C-terminal hotdog fold. Asp-1153 (proton donor; for dehydratase activity) is an active-site residue. The segment at Gly-1659–Val-1970 is enoyl reductase (ER) domain. The tract at residues Ser-1995–Asp-2172 is ketoreductase (KR) domain. Residues Ala-2280–Leu-2356 form the Carrier domain. The residue at position 2316 (Ser-2316) is an O-(pantetheine 4'-phosphoryl)serine.

It participates in secondary metabolite biosynthesis; terpenoid biosynthesis. In terms of biological role, low-reducing polyketide synthase; part of the gene cluster that mediates the biosynthesis of various drimane-type sesquiterpene esters, compounds that exhibit diverse biological activities and are widely present in eukaryotes. The pathway begins with the synthesis of the backbone drimenol by the terpene cyclase drtB using farnesyl pyrophosphate (FPP) as substrate. The cytochrome P450 monooxygenase drtD is then responsible for the hydroxylations at C-6, C-9 and C-12, as well as the oxidation of hydroxyl groups at C-6 and C-11 to a ketone and an aldehyde, respectively. Then, the biosynthesis can go in two directions, either the hydroxylated drimenol is further hydroxylated at C-2 and C-3 by an enzyme(s) not associated with the drt cluster, or the FAD-binding oxidoreductase drtC further oxidizes C-11 or C-12 to form the butyrolactone ring. DrtB, drtD and drtC are solely responsible for the formation of the different drimane structures observed during drimane sesquiterpenes biosynthesis. The polyketide synthase drtA synthesizes different lengths (C6 and C8) of PKS chains, which are then oxidized to varying degrees by the short-chain dehydrogenase drtF. Finally, these PKS chains are transferred onto drimane sesquiterpenes by the acyltransferase drtE, forming the sesquiterpene esters. In addition to the different fatty acyl-CoA chains produced by drtA, drtE is also able to use cinnamoyl-CoA as a substrate. This is Low-reducing polyketide synthase drtA from Aspergillus calidoustus.